The chain runs to 496 residues: Cytochrome P450 71D181 (496 aa).

The chain crosses the membrane as a helical; Signal-anchor for type II membrane protein span at residues 1–21 (MDISISWVAIILVISSYFIFM). Cysteine 435 contacts heme. The disordered stretch occupies residues 471–496 (MSETPGLSGPRKNPLIMVPTIHNPTS).

It belongs to the cytochrome P450 family. Heme serves as cofactor. In terms of tissue distribution, expressed at low levels in flowers, leaves and stems.

It localises to the membrane. The catalysed reaction is alpha-terpinene + 2 reduced [NADPH--hemoprotein reductase] + 2 O2 = carvacrol + 2 oxidized [NADPH--hemoprotein reductase] + 3 H2O + 2 H(+). It catalyses the reaction gamma-terpinene + 2 reduced [NADPH--hemoprotein reductase] + 2 O2 = carvacrol + 2 oxidized [NADPH--hemoprotein reductase] + 3 H2O + 2 H(+). It carries out the reaction (4S)-limonene + reduced [NADPH--hemoprotein reductase] + O2 = (1S,5R)-carveol + oxidized [NADPH--hemoprotein reductase] + H2O + H(+). The enzyme catalyses (4R)-limonene + reduced [NADPH--hemoprotein reductase] + O2 = (1R,5S)-carveol + oxidized [NADPH--hemoprotein reductase] + H2O + H(+). Its pathway is secondary metabolite biosynthesis; terpenoid biosynthesis. In terms of biological role, involved in the biosynthesis of phenolic monoterpenes natural products thymol and carvacrol which have a broad range of biological activities acting as antimicrobial compounds, insecticides, antioxidants and pharmaceutical agents. Catalyzes the C2-hydroxylation of gamma-terpinene and alpha-terpinene to produce carvacrol. Also mediates the C6-hydroxylation of (4S)-limonene and (4R)-limonene to form carveol. The sequence is that of Cytochrome P450 71D181 from Origanum vulgare (Wild marjoram).